The primary structure comprises 310 residues: Protein-L-isoaspartate O-methyltransferase (310 aa).

Residues 1–41 (MSGERAKRFPLALEDLKRAPRKSEGRPGERQTAGAVPKAAD) are disordered. The segment covering 14 to 29 (EDLKRAPRKSEGRPGE) has biased composition (basic and acidic residues). Residue serine 157 is part of the active site.

Belongs to the methyltransferase superfamily. L-isoaspartyl/D-aspartyl protein methyltransferase family.

It localises to the cytoplasm. The catalysed reaction is [protein]-L-isoaspartate + S-adenosyl-L-methionine = [protein]-L-isoaspartate alpha-methyl ester + S-adenosyl-L-homocysteine. Functionally, catalyzes the methyl esterification of L-isoaspartyl residues in peptides and proteins that result from spontaneous decomposition of normal L-aspartyl and L-asparaginyl residues. It plays a role in the repair and/or degradation of damaged proteins. This Burkholderia cenocepacia (strain HI2424) protein is Protein-L-isoaspartate O-methyltransferase.